The following is a 367-amino-acid chain: Chorismate synthase (367 aa).

Arginine 48 contributes to the NADP(+) binding site. Residues 125–127, 243–244, glycine 283, 298–302, and arginine 324 contribute to the FMN site; these read RSS, NA, and KPTSS.

This sequence belongs to the chorismate synthase family. In terms of assembly, homotetramer. The cofactor is FMNH2.

It catalyses the reaction 5-O-(1-carboxyvinyl)-3-phosphoshikimate = chorismate + phosphate. Its pathway is metabolic intermediate biosynthesis; chorismate biosynthesis; chorismate from D-erythrose 4-phosphate and phosphoenolpyruvate: step 7/7. Catalyzes the anti-1,4-elimination of the C-3 phosphate and the C-6 proR hydrogen from 5-enolpyruvylshikimate-3-phosphate (EPSP) to yield chorismate, which is the branch point compound that serves as the starting substrate for the three terminal pathways of aromatic amino acid biosynthesis. This reaction introduces a second double bond into the aromatic ring system. This Psychrobacter cryohalolentis (strain ATCC BAA-1226 / DSM 17306 / VKM B-2378 / K5) protein is Chorismate synthase.